A 913-amino-acid polypeptide reads, in one-letter code: Epithelial discoidin domain-containing receptor 1 (913 aa).

Positions 1–18 (MGPEALSSLLLLLLVASG) are cleaved as a signal peptide. Residues 21–417 (DMKGHFDPAK…VAKAEGSPTA (397 aa)) lie on the Extracellular side of the membrane. Positions 31 to 185 (CRYALGMQDR…VCLRVELYGC (155 aa)) constitute an F5/8 type C domain. 2 disulfides stabilise this stretch: Cys31/Cys185 and Cys74/Cys177. Positions 192–367 (LSYTAPVGQT…LFSEISFISD (176 aa)) are DS-like domain. 6 residues coordinate Ca(2+): Asn211, Gln230, Asp233, Val235, Tyr253, and Tyr255. An N-linked (GlcNAc...) asparagine glycan is attached at Asn211. N-linked (GlcNAc...) asparagine glycosylation is present at Asn260. Cysteines 303 and 348 form a disulfide. The Ca(2+) site is built by Ser360 and Glu361. N-linked (GlcNAc...) asparagine glycans are attached at residues Asn370 and Asn394. Residues 418–438 (ILIGCLVAIILLLLLIIALML) traverse the membrane as a helical segment. Residues 439 to 913 (WRLHWRRLLS…FLAEDALNTV (475 aa)) are Cytoplasmic-facing. Residues 470–499 (ILINNRPGPREPPPYQEPRPRGNPPHSAPC) form a disordered region. Residues 479–496 (REPPPYQEPRPRGNPPHS) are compositionally biased toward pro residues. The PPxY motif signature appears at 481-484 (PPPY). Phosphotyrosine; by autocatalysis is present on residues Tyr484, Tyr513, and Tyr520. Residues 610–905 (LRFKEKLGEG…PPFSQLHRFL (296 aa)) enclose the Protein kinase domain. 616-624 (LGEGQFGEV) is a binding site for ATP. A Phosphoserine modification is found at Ser631. Residue Lys655 coordinates ATP. Position 740 is a phosphotyrosine; by autocatalysis (Tyr740). The active-site Proton acceptor is Asp766. Residues Tyr792, Tyr796, and Tyr797 each carry the phosphotyrosine; by autocatalysis modification.

This sequence belongs to the protein kinase superfamily. Tyr protein kinase family. Insulin receptor subfamily. In terms of assembly, homodimer. Interacts (via PPxY motif) with WWC1 (via WW domains) in a collagen-regulated manner. Forms a tripartite complex with WWC1 and PRKCZ, but predominantly in the absence of collagen. Interacts (tyrosine phosphorylated) with SHC1. Interacts with SRC. Interacts with MYH9. Interacts with CDH1. Interacts with PTPN11. Interacts with NCK2. Post-translationally, autophosphorylated in response to fibrillar collagen binding. Glycosylation of Asn-211, but apparently not of Asn-260 or Asn-394, prevents autophosphorylation from occurring in the absence of collagen. Detected in T-47D, MDA-MB-175 and HBL-100 breast carcinoma cells, A-431 epidermoid carcinoma cells, SW48 and SNU-C2B colon carcinoma cells and Hs 294T melanoma cells (at protein level). Expressed at low levels in most adult tissues and is highest in the brain, lung, placenta and kidney. Lower levels of expression are detected in melanocytes, heart, liver, skeletal muscle and pancreas. Abundant in breast carcinoma cell lines. In the colonic mucosa, expressed in epithelia but not in the connective tissue of the lamina propria. In the thyroid gland, expressed in the epithelium of the thyroid follicles. In pancreas, expressed in the islets of Langerhans cells, but not in the surrounding epithelial cells of the exocrine pancreas. In kidney, expressed in the epithelia of the distal tubules. Not expressed in connective tissue, endothelial cells, adipose tissue, muscle cells or cells of hematopoietic origin.

The protein localises to the cell membrane. The protein resides in the secreted. The enzyme catalyses L-tyrosyl-[protein] + ATP = O-phospho-L-tyrosyl-[protein] + ADP + H(+). Its activity is regulated as follows. Inhibited by the multi-targeted cancer drugs imatinib and ponatinib. Its function is as follows. Tyrosine kinase that functions as a cell surface receptor for fibrillar collagen and regulates cell attachment to the extracellular matrix, remodeling of the extracellular matrix, cell migration, differentiation, survival and cell proliferation. Collagen binding triggers a signaling pathway that involves SRC and leads to the activation of MAP kinases. Regulates remodeling of the extracellular matrix by up-regulation of the matrix metalloproteinases MMP2, MMP7 and MMP9, and thereby facilitates cell migration and wound healing. Required for normal blastocyst implantation during pregnancy, for normal mammary gland differentiation and normal lactation. Required for normal ear morphology and normal hearing. Promotes smooth muscle cell migration, and thereby contributes to arterial wound healing. Also plays a role in tumor cell invasion. Phosphorylates PTPN11. The chain is Epithelial discoidin domain-containing receptor 1 (DDR1) from Homo sapiens (Human).